The following is a 312-amino-acid chain: Ribosomal RNA small subunit methyltransferase H (312 aa).

Residues 37 to 39, Asp57, Phe83, and Asp104 each bind S-adenosyl-L-methionine; that span reads GGH.

The protein belongs to the methyltransferase superfamily. RsmH family.

The protein localises to the cytoplasm. The catalysed reaction is cytidine(1402) in 16S rRNA + S-adenosyl-L-methionine = N(4)-methylcytidine(1402) in 16S rRNA + S-adenosyl-L-homocysteine + H(+). Its function is as follows. Specifically methylates the N4 position of cytidine in position 1402 (C1402) of 16S rRNA. The chain is Ribosomal RNA small subunit methyltransferase H from Malacoplasma penetrans (strain HF-2) (Mycoplasma penetrans).